The following is a 614-amino-acid chain: Glutamyl-tRNA(Gln) amidotransferase subunit E (614 aa).

Belongs to the GatB/GatE family. GatE subfamily. As to quaternary structure, heterodimer of GatD and GatE.

It catalyses the reaction L-glutamyl-tRNA(Gln) + L-glutamine + ATP + H2O = L-glutaminyl-tRNA(Gln) + L-glutamate + ADP + phosphate + H(+). Allows the formation of correctly charged Gln-tRNA(Gln) through the transamidation of misacylated Glu-tRNA(Gln) in organisms which lack glutaminyl-tRNA synthetase. The reaction takes place in the presence of glutamine and ATP through an activated gamma-phospho-Glu-tRNA(Gln). The GatDE system is specific for glutamate and does not act on aspartate. In Methanospirillum hungatei JF-1 (strain ATCC 27890 / DSM 864 / NBRC 100397 / JF-1), this protein is Glutamyl-tRNA(Gln) amidotransferase subunit E.